Reading from the N-terminus, the 218-residue chain is Protein-methionine-sulfoxide reductase heme-binding subunit MsrQ (218 aa).

5 consecutive transmembrane segments (helical) span residues leucine 14 to tryptophan 34, phenylalanine 60 to isoleucine 80, leucine 86 to leucine 106, proline 121 to threonine 141, and leucine 155 to lysine 175.

Belongs to the MsrQ family. As to quaternary structure, heterodimer of a catalytic subunit (MsrP) and a heme-binding subunit (MsrQ). It depends on FMN as a cofactor. Heme b is required as a cofactor.

The protein localises to the cell inner membrane. Its function is as follows. Part of the MsrPQ system that repairs oxidized periplasmic proteins containing methionine sulfoxide residues (Met-O), using respiratory chain electrons. Thus protects these proteins from oxidative-stress damage caused by reactive species of oxygen and chlorine generated by the host defense mechanisms. MsrPQ is essential for the maintenance of envelope integrity under bleach stress, rescuing a wide series of structurally unrelated periplasmic proteins from methionine oxidation. MsrQ provides electrons for reduction to the reductase catalytic subunit MsrP, using the quinone pool of the respiratory chain. The sequence is that of Protein-methionine-sulfoxide reductase heme-binding subunit MsrQ from Xanthomonas euvesicatoria pv. vesicatoria (strain 85-10) (Xanthomonas campestris pv. vesicatoria).